A 116-amino-acid chain; its full sequence is Large ribosomal subunit protein bL17 (116 aa).

The protein belongs to the bacterial ribosomal protein bL17 family. As to quaternary structure, part of the 50S ribosomal subunit. Contacts protein L32.

The sequence is that of Large ribosomal subunit protein bL17 from Gloeobacter violaceus (strain ATCC 29082 / PCC 7421).